Consider the following 371-residue polypeptide: Putative glutamate--cysteine ligase 2 (371 aa).

It belongs to the glutamate--cysteine ligase type 2 family. YbdK subfamily.

It carries out the reaction L-cysteine + L-glutamate + ATP = gamma-L-glutamyl-L-cysteine + ADP + phosphate + H(+). In terms of biological role, ATP-dependent carboxylate-amine ligase which exhibits weak glutamate--cysteine ligase activity. This is Putative glutamate--cysteine ligase 2 from Cupriavidus taiwanensis (strain DSM 17343 / BCRC 17206 / CCUG 44338 / CIP 107171 / LMG 19424 / R1) (Ralstonia taiwanensis (strain LMG 19424)).